Here is a 373-residue protein sequence, read N- to C-terminus: Dual-specificity RNA methyltransferase RlmN (373 aa).

Glu94 functions as the Proton acceptor in the catalytic mechanism. The 240-residue stretch at 100–339 (EDDRATLCVS…VIVRKTRGDD (240 aa)) folds into the Radical SAM core domain. Cys107 and Cys344 are joined by a disulfide. [4Fe-4S] cluster-binding residues include Cys114, Cys118, and Cys121. Residues 168-169 (GE), Ser200, 222-224 (SIH), and Asn301 each bind S-adenosyl-L-methionine. Cys344 serves as the catalytic S-methylcysteine intermediate.

This sequence belongs to the radical SAM superfamily. RlmN family. [4Fe-4S] cluster is required as a cofactor.

The protein resides in the cytoplasm. It carries out the reaction adenosine(2503) in 23S rRNA + 2 reduced [2Fe-2S]-[ferredoxin] + 2 S-adenosyl-L-methionine = 2-methyladenosine(2503) in 23S rRNA + 5'-deoxyadenosine + L-methionine + 2 oxidized [2Fe-2S]-[ferredoxin] + S-adenosyl-L-homocysteine. The catalysed reaction is adenosine(37) in tRNA + 2 reduced [2Fe-2S]-[ferredoxin] + 2 S-adenosyl-L-methionine = 2-methyladenosine(37) in tRNA + 5'-deoxyadenosine + L-methionine + 2 oxidized [2Fe-2S]-[ferredoxin] + S-adenosyl-L-homocysteine. In terms of biological role, specifically methylates position 2 of adenine 2503 in 23S rRNA and position 2 of adenine 37 in tRNAs. m2A2503 modification seems to play a crucial role in the proofreading step occurring at the peptidyl transferase center and thus would serve to optimize ribosomal fidelity. The protein is Dual-specificity RNA methyltransferase RlmN of Shewanella baltica (strain OS185).